The chain runs to 196 residues: Peptidyl-tRNA hydrolase (196 aa).

Histidine 15 is a tRNA binding site. Histidine 20 acts as the Proton acceptor in catalysis. Positions 66, 68, and 114 each coordinate tRNA.

The protein belongs to the PTH family. As to quaternary structure, monomer.

Its subcellular location is the cytoplasm. The enzyme catalyses an N-acyl-L-alpha-aminoacyl-tRNA + H2O = an N-acyl-L-amino acid + a tRNA + H(+). Its function is as follows. Hydrolyzes ribosome-free peptidyl-tRNAs (with 1 or more amino acids incorporated), which drop off the ribosome during protein synthesis, or as a result of ribosome stalling. Functionally, catalyzes the release of premature peptidyl moieties from peptidyl-tRNA molecules trapped in stalled 50S ribosomal subunits, and thus maintains levels of free tRNAs and 50S ribosomes. This chain is Peptidyl-tRNA hydrolase, found in Polynucleobacter asymbioticus (strain DSM 18221 / CIP 109841 / QLW-P1DMWA-1) (Polynucleobacter necessarius subsp. asymbioticus).